The sequence spans 1276 residues: Probable histone acetyltransferase HAC-like 3 (1276 aa).

A disordered region spans residues 391–421 (VDRAEQTSNSTVSKPTSPASDGSSGKHYPAK). Residues 396 to 413 (QTSNSTVSKPTSPASDGS) show a composition bias toward polar residues. The PHD-type zinc finger occupies 621–689 (SSICGRCHHL…EYTCAKCFLK (69 aa)). Residues 704 to 1130 (ILGARELPRT…ILYHLHDSTC (427 aa)) enclose the CBP/p300-type HAT domain. Residues 827–829 (IDS), 846–847 (RT), and Trp902 each bind acetyl-CoA. The stretch at 953–973 (EAERLLEKKDDDTSQKKETQL) forms a coiled coil. ZZ-type zinc fingers lie at residues 1013-1076 (CLQQ…EEPL) and 1125-1187 (LHDS…LQDY). Cys1018, Cys1021, Cys1033, Cys1036, Cys1042, Cys1045, His1058, His1066, Cys1130, Cys1133, Cys1145, Cys1148, Cys1154, Cys1157, His1168, and His1177 together coordinate Zn(2+). The TAZ-type zinc-finger motif lies at 1177 to 1260 (HVLQKYTLQD…DCSAPRCRDI (84 aa)).

The protein localises to the nucleus. It carries out the reaction L-lysyl-[protein] + acetyl-CoA = N(6)-acetyl-L-lysyl-[protein] + CoA + H(+). Acetyltransferase enzyme. Acetylates histones, giving a specific tag for transcriptional activation. The protein is Probable histone acetyltransferase HAC-like 3 of Oryza sativa subsp. japonica (Rice).